Consider the following 72-residue polypeptide: uncharacterized protein (72 aa).

The N-terminal stretch at 1–17 (MSLGLAIAVGIVLGVVA) is a signal peptide.

This is an uncharacterized protein from Schizosaccharomyces pombe (strain 972 / ATCC 24843) (Fission yeast).